The following is a 374-amino-acid chain: Histidine biosynthesis bifunctional protein HisB (374 aa).

Residues 1 to 183 (MKKKVLFIDR…RVAEFLFAGE (183 aa)) are histidinol-phosphatase. The active-site Nucleophile is the Asp-9. Residues Asp-9, Asp-11, and Asp-131 each coordinate Mg(2+). Asp-11 serves as the catalytic Proton donor. An imidazoleglycerol-phosphate dehydratase region spans residues 184-374 (RRAEIRRTTK…FELPSSKGVL (191 aa)).

This sequence in the N-terminal section; belongs to the histidinol-phosphatase family. It in the C-terminal section; belongs to the imidazoleglycerol-phosphate dehydratase family. The cofactor is Mg(2+).

The protein resides in the cytoplasm. It catalyses the reaction D-erythro-1-(imidazol-4-yl)glycerol 3-phosphate = 3-(imidazol-4-yl)-2-oxopropyl phosphate + H2O. The catalysed reaction is L-histidinol phosphate + H2O = L-histidinol + phosphate. It functions in the pathway amino-acid biosynthesis; L-histidine biosynthesis; L-histidine from 5-phospho-alpha-D-ribose 1-diphosphate: step 6/9. It participates in amino-acid biosynthesis; L-histidine biosynthesis; L-histidine from 5-phospho-alpha-D-ribose 1-diphosphate: step 8/9. The chain is Histidine biosynthesis bifunctional protein HisB from Bacteroides fragilis (strain ATCC 25285 / DSM 2151 / CCUG 4856 / JCM 11019 / LMG 10263 / NCTC 9343 / Onslow / VPI 2553 / EN-2).